We begin with the raw amino-acid sequence, 246 residues long: Phosphomannomutase (246 aa).

Aspartate 13 acts as the Nucleophile in catalysis. Mg(2+) is bound by residues aspartate 13 and aspartate 15. Catalysis depends on aspartate 15, which acts as the Proton donor/acceptor. 6 residues coordinate alpha-D-mannose 1-phosphate: arginine 22, arginine 124, arginine 135, arginine 142, serine 180, and aspartate 182. Mg(2+) is bound by residues aspartate 208, tyrosine 220, and threonine 225.

Belongs to the eukaryotic PMM family. In terms of assembly, homodimer. It depends on Mg(2+) as a cofactor. In terms of tissue distribution, expressed in roots, stems, leaves, flowers and immature fruits.

The protein localises to the cytoplasm. The enzyme catalyses alpha-D-mannose 1-phosphate = D-mannose 6-phosphate. It functions in the pathway nucleotide-sugar biosynthesis; GDP-alpha-D-mannose biosynthesis; alpha-D-mannose 1-phosphate from D-fructose 6-phosphate: step 2/2. In terms of biological role, catalyzes the interconversion of mannose-6-phosphate to mannose-1-phosphate, the precursor for the synthesis of GDP-mannose. GDP-mannose is an essential sugar nucleotide for the synthesis of D-mannose-containing cell wall polysaccharides (galactomannans and glucomannans), glycolipids, glycoproteins and the antioxidant L-ascorbate. Can complement the yeast temperature-sensitive mutant sec53-6. This is Phosphomannomutase from Arabidopsis thaliana (Mouse-ear cress).